The primary structure comprises 327 residues: uncharacterized protein (327 aa).

2 disordered regions span residues 127–170 and 298–327; these read LSEF…GIYR and NFEDVNDGSLASPVQIGQSYRKRKKNLKRR. 3 positions are modified to phosphoserine: Ser153, Ser154, and Ser309. Residues 317-327 show a composition bias toward basic residues; that stretch reads YRKRKKNLKRR.

This is an uncharacterized protein from Schizosaccharomyces pombe (strain 972 / ATCC 24843) (Fission yeast).